Consider the following 474-residue polypeptide: RNA-binding protein Nova-1 (474 aa).

Positions 1 to 12 (MAAAPIQQNGTH) are enriched in polar residues. Positions 1–43 (MAAAPIQQNGTHTGVPIDLDPPDSRKRPLEAPPEAGSTKRTNT) are disordered. The Bipartite nuclear localization signal motif lies at 26–42 (KRPLEAPPEAGSTKRTN). KH domains are found at residues 48 to 115 (QYFL…HGFI), 146 to 212 (IKQV…VELI), and 396 to 463 (KDVV…QYLI). Residues 394–474 (GSKDVVEIAV…QRITYEQGVR (81 aa)) form a required for RNA binding region.

Interacts with PTBP2; the interaction is direct.

It is found in the nucleus. Its function is as follows. Functions to regulate alternative splicing in neurons by binding pre-mRNA in a sequence-specific manner to activate exon inclusion or exclusion. It binds specifically to the sequences 5'-YCAY-3' and regulates splicing in only a subset of regulated exons. Binding to an exonic 5'-YCAY-3' cluster changes the protein complexes assembled on pre-mRNA, blocking U1 snRNP binding and exon inclusion, whereas binding to an intronic 5'-YCAY-3' cluster enhances spliceosome assembly and exon inclusion. Binding to 5'-YCAY-3' clusters results in a local and asymmetric action to regulate spliceosome assembly and alternative splicing in neurons. Binding to an exonic 5'-YCAY-3' cluster changed the protein complexes assembled on pre-mRNA, blocking U1 snRNP (small nuclear ribonucleoprotein) binding and exon inclusion, whereas binding to an intronic 5'-YCAY-3' cluster enhanced spliceosome assembly and exon inclusion. With NOVA1, they perform unique biological functions in different brain areas and cell types. Autoregulates its own expression by acting as a splicing repressor. Acts to activate the inclusion of exon E3A in the glycine receptor alpha-2 chain and of exon E9 in gamma-aminobutyric-acid receptor gamma-2 subunit via a distal downstream UCAU-rich intronic splicing enhancer. Acts to regulate a novel glycine receptor alpha-2 chain splice variant (alpha-2N) in developing spinal cord. The chain is RNA-binding protein Nova-1 from Rattus norvegicus (Rat).